The chain runs to 112 residues: uncharacterized protein (112 aa).

This is an uncharacterized protein from Dictyostelium discoideum (Social amoeba).